We begin with the raw amino-acid sequence, 233 residues long: Demethylmenaquinone methyltransferase (233 aa).

Residues Thr58, Asp79, and 106–107 each bind S-adenosyl-L-methionine; that span reads NA.

The protein belongs to the class I-like SAM-binding methyltransferase superfamily. MenG/UbiE family.

It carries out the reaction a 2-demethylmenaquinol + S-adenosyl-L-methionine = a menaquinol + S-adenosyl-L-homocysteine + H(+). It functions in the pathway quinol/quinone metabolism; menaquinone biosynthesis; menaquinol from 1,4-dihydroxy-2-naphthoate: step 2/2. Methyltransferase required for the conversion of demethylmenaquinol (DMKH2) to menaquinol (MKH2). This Bacillus subtilis (strain 168) protein is Demethylmenaquinone methyltransferase.